Consider the following 72-residue polypeptide: UPF0270 protein PM1156 (72 aa).

It belongs to the UPF0270 family.

This Pasteurella multocida (strain Pm70) protein is UPF0270 protein PM1156.